A 426-amino-acid polypeptide reads, in one-letter code: Ammonium transporter Rh type A (426 aa).

Residues 1–4 (MRFK) lie on the Cytoplasmic side of the membrane. Residues 5-25 (FPLMAIGLEVVMIVLFALFVQ) traverse the membrane as a helical segment. Residues 26–54 (YETSVNTSRNPNETESAAMDVEKTMESYP) are Extracellular-facing. N31 and N37 each carry an N-linked (GlcNAc...) asparagine glycan. A helical membrane pass occupies residues 55–75 (FFQDVHIMVFAGFGFLMTFLW). Over 76–78 (KYG) the chain is Cytoplasmic. A helical transmembrane segment spans residues 79-99 (FSGVGINLLIAALGLQWGTII). Over 100 to 124 (QGIFRSHGQKFLIEMKNMIHADFST) the chain is Extracellular. Transmembrane regions (helical) follow at residues 125-145 (VTVL…QMLI) and 146-166 (MTIL…KILW). The Extracellular segment spans residues 167–170 (ASDT). The helical transmembrane segment at 171 to 191 (GESMTIHAFGAYFGLAVAGIL) threads the bilayer. Residues 192–210 (YRSGLKEKHSNEESVYHSD) are Cytoplasmic-facing. The chain crosses the membrane as a helical span at residues 211–231 (LFAMIGSLFLWIFWPSFNSAT). At 232 to 241 (ADEAKKQYRA) the chain is on the extracellular side. A helical membrane pass occupies residues 242–262 (IVNTYFSLAASVVTAYACSSL). The Cytoplasmic segment spans residues 263–270 (LESRGKLN). A helical membrane pass occupies residues 271–288 (MVHIQNATLAGGVAVGTC). Residues 289-292 (ADME) lie on the Extracellular side of the membrane. A helical membrane pass occupies residues 293 to 313 (IPPYYAMIIGSIAGAVSVFGF). At 314-331 (KFLTPLFTTKLRIHDTCG) the chain is on the cytoplasmic side. Residues 332–352 (VHNLHGLPGVIGGLAGIITVA) form a helical membrane-spanning segment. At 353 to 371 (LEESDSTKTVSQAAALGSS) the chain is on the extracellular side. A helical transmembrane segment spans residues 372–392 (IATALVGGLITGAILKIPFWA). Residues 393-426 (QPPDEDCYDDSVYWEVPERKEYDNHFHELLSTLH) are Cytoplasmic-facing.

The protein belongs to the ammonium transporter (TC 2.A.49) family. Rh subfamily. In terms of assembly, homodimer. Heterotrimer; a RHCE monomer interacts with a RHAG homodimer. Component of the ankyrin-1 complex in the erythrocyte, composed of ANK1, RHCE, RHAG, SLC4A1, EPB42, GYPA, GYPB and AQP1. Interacts with GYPB (via the N-terminal); this interaction bridges the (RHAG)2(RHCE) heterotrimer with the SLC4A1 Band 3 I dimer complexed with GYPA. Glycosylated.

Its subcellular location is the membrane. The catalysed reaction is methylamine(out) = methylamine(in). The enzyme catalyses NH4(+)(in) = NH4(+)(out). It carries out the reaction CO2(out) = CO2(in). In terms of biological role, component of the ankyrin-1 complex, a multiprotein complex involved in the stability and shape of the erythrocyte membrane. Heterotrimer with RHCE (RHAG)2(RHCE), that transports ammonium and its related derivative methylammonium, in both neutral and ionic forms, across the erythrocyte membrane. The transport of NH4(+) is electrogenic and masks the NH3 transport. Also, may act as a CO2 channel. Moreover in erythrocyte, regulates RHD membrane expression and is associated with rhesus blood group antigen expression. The protein is Ammonium transporter Rh type A of Bos taurus (Bovine).